The chain runs to 364 residues: Envelope glycoprotein US27 (364 aa).

Over 1 to 36 (MTTSTTTTTNIMLQVSNVTNHTLNSTEIYQLFEYTR) the chain is Virion surface. N-linked (GlcNAc...) asparagine; by host glycans are attached at residues asparagine 17, asparagine 20, and asparagine 24. A helical membrane pass occupies residues 37–57 (FGVWLMCIVGTFLNMLVITTI). At 58 to 69 (LYYRRKKKSPSD) the chain is on the intravirion side. A helical membrane pass occupies residues 70–90 (TYICNLAVADLLIVVGLPFFL). The Virion surface portion of the chain corresponds to 91–103 (EYAKHHPKLSREV). Residues 104-124 (VCSGLNACFYICLFAGVCFLI) traverse the membrane as a helical segment. Over 125-150 (NLSMDRYCVIVWGVELNRVRNNKRAT) the chain is Intravirion. A helical transmembrane segment spans residues 151 to 171 (CWVVIFWILAALMGMPHYLMY). Over 172 to 188 (SHTNNECVGEFANETSG) the chain is Virion surface. A helical transmembrane segment spans residues 189–209 (WFPVFLNTKVNICGYLAPIVL). At 210 to 234 (MAYTYNRMVRFIINYVGKWHMQTLH) the chain is on the intravirion side. The chain crosses the membrane as a helical span at residues 235–255 (VLLVVVVSFASFWFPFNLALF). The Virion surface portion of the chain corresponds to 256–279 (LESIRLLSGTQNETLQTVITFCLY). Residues 280-300 (VGQFLAYVRACLNPGIYILVG) form a helical membrane-spanning segment. The Intravirion portion of the chain corresponds to 301–364 (TQMRKDMWTT…MESGEEEFLL (64 aa)). Residues 344–364 (KRTHYDRKHAPMESGEEEFLL) are disordered.

It belongs to the G-protein coupled receptor 1 family. As to quaternary structure, heterodimerizes with US28.

The protein resides in the virion. It localises to the host cell membrane. Its function is as follows. Plays an important role in spread of HCMV via the extracellular route. As a G-protein-coupled receptor (vGPCR), may activate signaling pathways important for virion assembly or egress processes. The chain is Envelope glycoprotein US27 (US27) from Homo sapiens (Human).